The chain runs to 253 residues: Thiamine import ATP-binding protein ThiQ (253 aa).

The 229-residue stretch at 8 to 236 folds into the ABC transporter domain; sequence VRLDKVSFSY…AGPEAFRRYI (229 aa). 38-45 contacts ATP; that stretch reads GPSGSGKS.

Belongs to the ABC transporter superfamily. Thiamine importer (TC 3.A.1.19.1) family. As to quaternary structure, the complex is composed of two ATP-binding proteins (ThiQ), two transmembrane proteins (ThiP) and a solute-binding protein (ThiB).

It localises to the cell inner membrane. The catalysed reaction is thiamine(out) + ATP + H2O = thiamine(in) + ADP + phosphate + H(+). Functionally, part of the ABC transporter complex ThiBPQ involved in thiamine import. Responsible for energy coupling to the transport system. The polypeptide is Thiamine import ATP-binding protein ThiQ (Mesorhizobium japonicum (strain LMG 29417 / CECT 9101 / MAFF 303099) (Mesorhizobium loti (strain MAFF 303099))).